The following is a 286-amino-acid chain: Bifunctional protein FolD (286 aa).

NADP(+) contacts are provided by residues 166–168 (GAS) and Ile232.

The protein belongs to the tetrahydrofolate dehydrogenase/cyclohydrolase family. Homodimer.

The catalysed reaction is (6R)-5,10-methylene-5,6,7,8-tetrahydrofolate + NADP(+) = (6R)-5,10-methenyltetrahydrofolate + NADPH. The enzyme catalyses (6R)-5,10-methenyltetrahydrofolate + H2O = (6R)-10-formyltetrahydrofolate + H(+). Its pathway is one-carbon metabolism; tetrahydrofolate interconversion. Its function is as follows. Catalyzes the oxidation of 5,10-methylenetetrahydrofolate to 5,10-methenyltetrahydrofolate and then the hydrolysis of 5,10-methenyltetrahydrofolate to 10-formyltetrahydrofolate. This chain is Bifunctional protein FolD, found in Shewanella woodyi (strain ATCC 51908 / MS32).